Consider the following 144-residue polypeptide: Large ribosomal subunit protein uL15 (144 aa).

Residues 1–58 (MHLNTLSPAPGSHKARKRCGRGIGSGIGKTGGRGHKGQKSRSGGSVRPGFEGGQMPLK) form a disordered region. Residues 21-31 (RGIGSGIGKTG) are compositionally biased toward gly residues.

The protein belongs to the universal ribosomal protein uL15 family. Part of the 50S ribosomal subunit.

Functionally, binds to the 23S rRNA. The polypeptide is Large ribosomal subunit protein uL15 (Colwellia psychrerythraea (strain 34H / ATCC BAA-681) (Vibrio psychroerythus)).